The following is a 220-amino-acid chain: Membrane steroid-binding protein 1 (220 aa).

Residues 22–42 form a helical membrane-spanning segment; that stretch reads VVFFTALALAFAIYQVISGWF. Residues 74–171 form the Cytochrome b5 heme-binding domain; it reads EITEEELKQY…SKYAKVGTVK (98 aa). Positions 74 to 171 are steroid-binding; sequence EITEEELKQY…SKYAKVGTVK (98 aa). The disordered stretch occupies residues 174–220; sequence GSEPETASVSEPTENVEQDAHVTTTPGKTVVDKSDDAPAETVLKKEE. Positions 178-200 are enriched in polar residues; sequence ETASVSEPTENVEQDAHVTTTPG. A compositionally biased stretch (basic and acidic residues) spans 203–220; sequence VVDKSDDAPAETVLKKEE.

The protein belongs to the cytochrome b5 family. MAPR subfamily. Interacts with BAK1 (via extracellular region). In terms of tissue distribution, expressed in cotyledons, stems, roots, leaves, flower and silique stalks, pistils and stigmas, but not in anthers.

It localises to the cell membrane. Its subcellular location is the endosome membrane. Its function is as follows. MSBP1 can bind to multiple steroid compounds with different affinities. Negatively regulates cell elongation and brassinosteroid signaling. May act as a coreceptor with BAK1 and enhances its endocytosis. The polypeptide is Membrane steroid-binding protein 1 (MSBP1) (Arabidopsis thaliana (Mouse-ear cress)).